A 189-amino-acid polypeptide reads, in one-letter code: UPF0312 protein VIBHAR_05924 (189 aa).

A signal peptide spans 1-22; it reads MKKSLFATGLAIAIALPFGANA.

The protein belongs to the UPF0312 family. Type 1 subfamily.

The protein resides in the periplasm. The sequence is that of UPF0312 protein VIBHAR_05924 from Vibrio campbellii (strain ATCC BAA-1116).